The following is a 1241-amino-acid chain: Sterol 3-beta-glucosyltransferase (1241 aa).

The segment covering 1–11 has biased composition (acidic residues); sequence MSGIESTEEPC. 2 disordered regions span residues 1 to 97 and 124 to 189; these read MSGI…KPSI and DQQV…TLRK. The span at 25 to 34 shows a compositional bias: basic and acidic residues; that stretch reads PEERQTRKDS. Residues 136–155 are compositionally biased toward acidic residues; that stretch reads ESEDQQADESSDEQEDDDQD. The GRAM 1 domain maps to 220-267; sequence NKLKRTFDISDTDVFISDYPCWLMGDVLLQGHLYITKHHILFFAFLPK. Residues 271–373 form the PH domain; the sequence is SISKSGALTT…WVSSLKKHIF (103 aa). A disordered region spans residues 499–556; the sequence is DDFSQEQESAESSKPVSDDEIVSADDNQELEEKQPQDNLANAEKENHDKVSRANSRRT. The segment covering 516-527 has biased composition (acidic residues); it reads DDEIVSADDNQE. Over residues 540–549 the composition is skewed to basic and acidic residues; sequence AEKENHDKVS. The region spanning 609–675 is the GRAM 2 domain; sequence ERFRKHFSLT…SDIENVNKEK (67 aa). Residues 720–741 are disordered; that stretch reads KGSTDSSPPNASEGSSDESCNL. Residues 723-741 show a composition bias toward polar residues; it reads TDSSPPNASEGSSDESCNL. Residues Ser797, Arg798, Asp800, Asn1071, Val1098, His1100, His1113, Ser1116, Gly1117, Thr1118, Asp1137, and Gln1138 each coordinate UDP-alpha-D-glucose.

This sequence belongs to the glycosyltransferase 28 family.

Its subcellular location is the cytoplasm. It localises to the preautophagosomal structure membrane. It catalyses the reaction a sterol + UDP-alpha-D-glucose = a sterol 3-beta-D-glucoside + UDP + H(+). It carries out the reaction ergosterol + UDP-alpha-D-glucose = ergosteryl 3-beta-D-glucoside + UDP + H(+). Functionally, sterol glycosyltransferase responsible for the glycosylation of ergosterol to form ergosterol-glucoside. Mediates autophagic degradation of peroxisomes (pexophagy). The sequence is that of Sterol 3-beta-glucosyltransferase from Pichia angusta (Yeast).